The sequence spans 280 residues: Putative ABC transporter ATP-binding protein MTH_133 (280 aa).

The 236-residue stretch at 6–241 folds into the ABC transporter domain; sequence IEAVDIRYTY…IDTIRGANLR (236 aa). 39 to 46 is a binding site for ATP; that stretch reads GPNGAGKS.

This sequence belongs to the ABC transporter superfamily.

The protein resides in the cell membrane. Probably part of an ABC transporter complex. Responsible for energy coupling to the transport system. The chain is Putative ABC transporter ATP-binding protein MTH_133 from Methanothermobacter thermautotrophicus (strain ATCC 29096 / DSM 1053 / JCM 10044 / NBRC 100330 / Delta H) (Methanobacterium thermoautotrophicum).